A 98-amino-acid polypeptide reads, in one-letter code: Integration host factor subunit beta (98 aa).

It belongs to the bacterial histone-like protein family. Heterodimer of an alpha and a beta chain.

In terms of biological role, this protein is one of the two subunits of integration host factor, a specific DNA-binding protein that functions in genetic recombination as well as in transcriptional and translational control. This is Integration host factor subunit beta from Pseudomonas putida (strain GB-1).